The primary structure comprises 161 residues: Nucleotide-binding protein BMASAVP1_A0673 (161 aa).

This sequence belongs to the YajQ family.

Nucleotide-binding protein. The sequence is that of Nucleotide-binding protein BMASAVP1_A0673 from Burkholderia mallei (strain SAVP1).